A 94-amino-acid chain; its full sequence is Co-chaperonin GroES (94 aa).

Belongs to the GroES chaperonin family. Heptamer of 7 subunits arranged in a ring. Interacts with the chaperonin GroEL.

It localises to the cytoplasm. Its function is as follows. Together with the chaperonin GroEL, plays an essential role in assisting protein folding. The GroEL-GroES system forms a nano-cage that allows encapsulation of the non-native substrate proteins and provides a physical environment optimized to promote and accelerate protein folding. GroES binds to the apical surface of the GroEL ring, thereby capping the opening of the GroEL channel. In Orientia tsutsugamushi (Rickettsia tsutsugamushi), this protein is Co-chaperonin GroES.